We begin with the raw amino-acid sequence, 99 residues long: UPF0045 protein MTH_1187 (99 aa).

Belongs to the UPF0045 family. In terms of assembly, homotetramer.

This is UPF0045 protein MTH_1187 from Methanothermobacter thermautotrophicus (strain ATCC 29096 / DSM 1053 / JCM 10044 / NBRC 100330 / Delta H) (Methanobacterium thermoautotrophicum).